Here is a 436-residue protein sequence, read N- to C-terminus: GTPase Obg (436 aa).

The region spanning 2 to 160 (SMFLDTAKIQ…RELLLELKVL (159 aa)) is the Obg domain. The OBG-type G domain maps to 161–338 (ADVGLVGFPS…LLDATAELLD (178 aa)). GTP contacts are provided by residues 167–174 (GFPSVGKS), 192–196 (FTTIV), 214–217 (DLPG), 284–287 (NKMD), and 319–321 (SSL). Residues Ser-174 and Thr-194 each coordinate Mg(2+). Positions 358 to 436 (GFDEEAPAFE…IGKFEFEFVD (79 aa)) constitute an OCT domain.

This sequence belongs to the TRAFAC class OBG-HflX-like GTPase superfamily. OBG GTPase family. As to quaternary structure, monomer. Mg(2+) serves as cofactor.

The protein resides in the cytoplasm. Its function is as follows. An essential GTPase which binds GTP, GDP and possibly (p)ppGpp with moderate affinity, with high nucleotide exchange rates and a fairly low GTP hydrolysis rate. Plays a role in control of the cell cycle, stress response, ribosome biogenesis and in those bacteria that undergo differentiation, in morphogenesis control. This Streptococcus gordonii (strain Challis / ATCC 35105 / BCRC 15272 / CH1 / DL1 / V288) protein is GTPase Obg.